The sequence spans 179 residues: Large ribosomal subunit protein uL5 (179 aa).

The protein belongs to the universal ribosomal protein uL5 family. In terms of assembly, part of the 50S ribosomal subunit; part of the 5S rRNA/L5/L18/L25 subcomplex. Contacts the 5S rRNA and the P site tRNA. Forms a bridge to the 30S subunit in the 70S ribosome.

This is one of the proteins that bind and probably mediate the attachment of the 5S RNA into the large ribosomal subunit, where it forms part of the central protuberance. In the 70S ribosome it contacts protein S13 of the 30S subunit (bridge B1b), connecting the 2 subunits; this bridge is implicated in subunit movement. Contacts the P site tRNA; the 5S rRNA and some of its associated proteins might help stabilize positioning of ribosome-bound tRNAs. In Janthinobacterium sp. (strain Marseille) (Minibacterium massiliensis), this protein is Large ribosomal subunit protein uL5.